The primary structure comprises 207 residues: Claudin-11 (207 aa).

Residue methionine 1 is a topological domain, cytoplasmic. Residues valine 2 to isoleucine 22 form a helical membrane-spanning segment. Residues valine 23–arginine 82 lie on the Extracellular side of the membrane. Residues alanine 83–leucine 103 traverse the membrane as a helical segment. Over proline 104–leucine 122 the chain is Cytoplasmic. A helical membrane pass occupies residues alanine 123–valine 143. Residues cysteine 144–serine 157 lie on the Extracellular side of the membrane. A helical membrane pass occupies residues leucine 158–cysteine 178. The Cytoplasmic portion of the chain corresponds to alanine 179–valine 207. A phosphoserine mark is found at serine 193, serine 194, serine 197, and serine 198.

Belongs to the claudin family. As to quaternary structure, interacts with tetraspanin-3/TSPAN3. Interacts with OCLN.

The protein localises to the cell junction. It localises to the tight junction. Its subcellular location is the cell membrane. Functionally, plays a major role in tight junction-specific obliteration of the intercellular space, through calcium-independent cell-adhesion activity. In Macaca fascicularis (Crab-eating macaque), this protein is Claudin-11 (CLDN11).